Reading from the N-terminus, the 689-residue chain is Glycine--tRNA ligase beta subunit (689 aa).

This sequence belongs to the class-II aminoacyl-tRNA synthetase family. As to quaternary structure, tetramer of two alpha and two beta subunits.

The protein resides in the cytoplasm. The enzyme catalyses tRNA(Gly) + glycine + ATP = glycyl-tRNA(Gly) + AMP + diphosphate. This Coxiella burnetii (strain RSA 493 / Nine Mile phase I) protein is Glycine--tRNA ligase beta subunit (glyS).